We begin with the raw amino-acid sequence, 274 residues long: MAIVKCKPTSPGRRFVVKVVNQELHKGAPHAPLLEKKSKSGGRNNNGRITTRHVGGGHKQHYRLVDFRRNDKDGIAATVERIEYDPNRTAHIALLLYADGERRYIIAPKGVSAGDQLIAGALAPIKPGNALQLRNIPVGSTVHGIELKPGKGAQIARSAGASAQLVAREGVYVTLRLRSGEMRKVLAECRATLGEVSNSEHSLRSLGKAGAKRWRGVRPTVRGVAMNPVDHPHGGGEGRTSGGRHPVSPWGFPTKGAKTRGNKRTDKMIVRRRK.

Disordered stretches follow at residues 28 to 55 and 224 to 274; these read APHAPLLEKKSKSGGRNNNGRITTRHVG and VAMN…RRRK. The span at 263-274 shows a compositional bias: basic and acidic residues; the sequence is KRTDKMIVRRRK.

This sequence belongs to the universal ribosomal protein uL2 family. As to quaternary structure, part of the 50S ribosomal subunit. Forms a bridge to the 30S subunit in the 70S ribosome.

Functionally, one of the primary rRNA binding proteins. Required for association of the 30S and 50S subunits to form the 70S ribosome, for tRNA binding and peptide bond formation. It has been suggested to have peptidyltransferase activity; this is somewhat controversial. Makes several contacts with the 16S rRNA in the 70S ribosome. The chain is Large ribosomal subunit protein uL2 from Pseudomonas fluorescens (strain ATCC BAA-477 / NRRL B-23932 / Pf-5).